The primary structure comprises 113 residues: Hemerythrin (113 aa).

Fe cation contacts are provided by histidine 25, histidine 54, glutamate 58, histidine 73, histidine 77, histidine 101, and aspartate 106.

The protein belongs to the hemerythrin family. In terms of assembly, homooctamer.

In terms of biological role, hemerythrin is a respiratory protein in blood cells of certain marine worms. The oxygen-binding site in each chain contains two iron atoms. In Themiste dyscrita (Peanut worm), this protein is Hemerythrin.